The primary structure comprises 186 residues: UPF0301 protein Mmc1_0726 (186 aa).

It belongs to the UPF0301 (AlgH) family.

This chain is UPF0301 protein Mmc1_0726, found in Magnetococcus marinus (strain ATCC BAA-1437 / JCM 17883 / MC-1).